The chain runs to 236 residues: Ribose-5-phosphate isomerase (236 aa).

Residues threonine 27–threonine 30, aspartate 84–aspartate 87, and lysine 97–glycine 100 contribute to the substrate site. Residue glutamate 106 is the Proton acceptor of the active site. Position 124 (lysine 124) interacts with substrate.

The protein belongs to the ribose 5-phosphate isomerase family. Homodimer.

It carries out the reaction aldehydo-D-ribose 5-phosphate = D-ribulose 5-phosphate. The protein operates within carbohydrate degradation; pentose phosphate pathway; D-ribose 5-phosphate from D-ribulose 5-phosphate (non-oxidative stage): step 1/1. Functionally, involved in the first step of the non-oxidative branch of the pentose phosphate pathway. It catalyzes the reversible conversion of ribose-5-phosphate to ribulose 5-phosphate. The protein is Ribose-5-phosphate isomerase of Plasmodium falciparum (isolate 3D7).